The sequence spans 98 residues: Large ribosomal subunit protein uL23 (98 aa).

This sequence belongs to the universal ribosomal protein uL23 family. In terms of assembly, part of the 50S ribosomal subunit. Contacts protein L29, and trigger factor when it is bound to the ribosome.

Its function is as follows. One of the early assembly proteins it binds 23S rRNA. One of the proteins that surrounds the polypeptide exit tunnel on the outside of the ribosome. Forms the main docking site for trigger factor binding to the ribosome. The chain is Large ribosomal subunit protein uL23 from Halorhodospira halophila (strain DSM 244 / SL1) (Ectothiorhodospira halophila (strain DSM 244 / SL1)).